We begin with the raw amino-acid sequence, 939 residues long: MNWDTPIDLAAAGSPSALSHQSLRDNIELVEQLLRQVAAQEGGGDLVELLDRLWASHQDRTGEGLALIRELSLEKSVLAIRAFSIYFQLINIVEQHHERKRLRLQASFSADTAQPGSFCWLFDEMKSLGVSTPEIERVLQQLDVRLVFTAHPTEIVRRTIRTKHRRIVHLLDDLDNALSEWQQQQVHTTMLEEIRIWWRTDELHQVRPTVLDEVAHTVHYFEEVLFEAMPRVRSELVRCLDMFHPSLTRSLGTFCRFGSWVGSDRDGNPSVNALVTWKTACHQRSRVLAKYIKSVERLRDLLSLAEGNPPQDLLLALEQDQRDLGEVYERYSVVYLQEPYRLKLSYILERLEHTRERNAWLEVHGPQRLSQPDEPGWLHYYRHAHELLAELHLLRQCLRTTGIGCRPLETLIDQVEVFGFHLAGLDVRQDSTRHEDTLTEVSAKLRLTATPYAELDEQARLEWLVRELQTLRPLIPAELPFSARTEETIQTFRMIRRLQKEFGSEICHTYIISMSKQASDLLEVLLLAEEAGLFDPATGTGTLMVVPLFETVEDLRNAPHVLEQLFSLPLYRCYLTCHQNLQEVMLGYSDSNKDSGFLSSSWEIFLAQQHIQQVARRHGVQLRIFHGRGGTVGRGGGPSYQAILAQPDGTVSGRIKITEQGEVLASKYSLFELAAFNIETVTAAVIQASVLPTSPPGSRNWELRLQELSDVARRTYRQLVYEQEGFIDFFCHVTPIDEISQLQISSRPSRREGRRDLASLRAIPWVFSWTQSRFLLQAWYGLGTALDGFIRCNRERNLAELRSMYRQWPFFRTLISKVEMTLAKVDLQVAANYVQELLPKEHEHTGECIFALIAAELERTRECVLAITEHRQLLEDNPPLQRSIALRNATIAPLGYLQATLLKYLRYENRQPRSYSRNELLRGALLTINGIAAGMRNTG.

Residues His-151 and Lys-593 contribute to the active site.

Belongs to the PEPCase type 1 family. Mg(2+) serves as cofactor.

It catalyses the reaction oxaloacetate + phosphate = phosphoenolpyruvate + hydrogencarbonate. Functionally, forms oxaloacetate, a four-carbon dicarboxylic acid source for the tricarboxylic acid cycle. The sequence is that of Phosphoenolpyruvate carboxylase from Gloeobacter violaceus (strain ATCC 29082 / PCC 7421).